We begin with the raw amino-acid sequence, 291 residues long: Bifunctional protein FolD (291 aa).

NADP(+) is bound by residues 167–169 (GRS), Ser-192, and Ile-233.

The protein belongs to the tetrahydrofolate dehydrogenase/cyclohydrolase family. Homodimer.

The enzyme catalyses (6R)-5,10-methylene-5,6,7,8-tetrahydrofolate + NADP(+) = (6R)-5,10-methenyltetrahydrofolate + NADPH. It carries out the reaction (6R)-5,10-methenyltetrahydrofolate + H2O = (6R)-10-formyltetrahydrofolate + H(+). The protein operates within one-carbon metabolism; tetrahydrofolate interconversion. In terms of biological role, catalyzes the oxidation of 5,10-methylenetetrahydrofolate to 5,10-methenyltetrahydrofolate and then the hydrolysis of 5,10-methenyltetrahydrofolate to 10-formyltetrahydrofolate. This chain is Bifunctional protein FolD, found in Dichelobacter nodosus (strain VCS1703A).